Reading from the N-terminus, the 55-residue chain is Large ribosomal subunit protein bL33 (55 aa).

Belongs to the bacterial ribosomal protein bL33 family.

The protein is Large ribosomal subunit protein bL33 of Granulibacter bethesdensis (strain ATCC BAA-1260 / CGDNIH1).